The chain runs to 290 residues: Pirin (290 aa).

Residues histidine 56, histidine 58, histidine 101, and glutamate 103 each coordinate Fe cation.

This sequence belongs to the pirin family. In terms of assembly, may interact with NF1/CTF1. Interacts with BCL3. Identified in a complex comprised of PIR, BLC3, NFKB1 and target DNA. Fe cation serves as cofactor. Weakly expressed in bone marrow.

The protein resides in the nucleus. Its subcellular location is the cytoplasm. The catalysed reaction is quercetin + O2 = 2-(3,4-dihydroxybenzoyloxy)-4,6-dihydroxybenzoate + CO. The protein operates within flavonoid metabolism; quercetin degradation. Its function is as follows. Transcriptional coregulator of NF-kappa-B which facilitates binding of NF-kappa-B proteins to target kappa-B genes in a redox-state-dependent manner. May be required for efficient terminal myeloid maturation of hematopoietic cells. Has quercetin 2,3-dioxygenase activity (in vitro). The polypeptide is Pirin (Pir) (Mus musculus (Mouse)).